The primary structure comprises 791 residues: Putative DNA (cytosine-5)-methyltransferase CMT1 (791 aa).

The tract at residues 37–59 (YQSKKTKLQAPTKKPANKGGKKE) is disordered. The BAH domain maps to 79 to 199 (VLINLNDDVY…VPYLNFTSAD (121 aa)). The SAM-dependent MTase C5-type domain maps to 225 to 768 (KFLLDLYSGC…YAFGMASQGL (544 aa)). Positions 308–333 (VESISELEDEEVEENDDIDEASTGAE) form a coiled coil. Residues 339-404 (FEVEKFLGIM…DGFKSHLLPL (66 aa)) form the Chromo domain. Cysteine 417 is an active-site residue.

The protein belongs to the class I-like SAM-binding methyltransferase superfamily. C5-methyltransferase family. In terms of tissue distribution, expressed in flowers. Not detected in leaves, roots, seedlings and plants prior formation of flower buds.

It is found in the nucleus. The catalysed reaction is a 2'-deoxycytidine in DNA + S-adenosyl-L-methionine = a 5-methyl-2'-deoxycytidine in DNA + S-adenosyl-L-homocysteine + H(+). May be involved in the CpXpG methylation and in gene silencing. The sequence is that of Putative DNA (cytosine-5)-methyltransferase CMT1 (CMT1) from Arabidopsis thaliana (Mouse-ear cress).